A 237-amino-acid chain; its full sequence is Probable transcriptional regulatory protein PSHAa1370 (237 aa).

The protein belongs to the TACO1 family.

The protein resides in the cytoplasm. In Pseudoalteromonas translucida (strain TAC 125), this protein is Probable transcriptional regulatory protein PSHAa1370.